The following is a 324-amino-acid chain: Glutathione synthetase (324 aa).

In terms of domain architecture, ATP-grasp spans 125 to 312; sequence EKLFTTTHFP…ISTIILDNLE (188 aa). ATP is bound at residue 152 to 209; the sequence is FIKTYKDIIIKPLHGMAGLSIFRIKEHDPNTSVIIETMTKYETIPCISQNYITDIQKG. Residues E283 and N285 each coordinate Mg(2+).

This sequence belongs to the prokaryotic GSH synthase family. Mg(2+) is required as a cofactor. It depends on Mn(2+) as a cofactor.

It catalyses the reaction gamma-L-glutamyl-L-cysteine + glycine + ATP = glutathione + ADP + phosphate + H(+). It functions in the pathway sulfur metabolism; glutathione biosynthesis; glutathione from L-cysteine and L-glutamate: step 2/2. This chain is Glutathione synthetase, found in Buchnera aphidicola subsp. Baizongia pistaciae (strain Bp).